A 544-amino-acid polypeptide reads, in one-letter code: MGCVRSKEAKGPALKYQPDNSNVVPVSAHLGHYGPEPTIMGQSPAMKTQNNSHPTALSPFGGVSSPMTPFGGASTSFTSVTVNNPFPAVITGGVTFFVALYDYEARTSDDLSFRKGDRFQIINNTEGDWWEARSINTGENGYIPSNYVAPADSIQSEEWYFGKLSRKDTERLLLLPGNERGTFLIRESETTKGAYSLSLRDWDETKGDNCKHYKIRKLDNGGYYITTRTQFMSLQMLVKHYTEHVDGLCYKLTTVCPQVKPQTQGIAKDAWEIPRESLRLDVRLGQGCFGEVWMGTWNGTTKVAIKTLKPGTMSPEAFLEEAQIMKKLRHDKLVPLYAVVSEEPIYIVTEFMGKGSLLDFLKEGDGKHLKLPQLVDMASQIADGMAFIERMNYIHRDLRAANILVADNLVCKIADFGLARLIEDNEYTARQGAKFPIKWTAPEAALYGRFTIKSDVWSFGILLTELVTKGRVPYPGMVNREVLEQVDRGYRMPCPQGCPESLHEMMRQCWKKEPDERPTFEYIQSFLEDYFTATEPQYQPGDNL.

Gly2 carries the N-myristoyl glycine lipid modification. An SH3 domain is found at 92-153 (GGVTFFVALY…PSNYVAPADS (62 aa)). Positions 159–256 (WYFGKLSRKD…GLCYKLTTVC (98 aa)) constitute an SH2 domain. A Protein kinase domain is found at 278–531 (LRLDVRLGQG…YIQSFLEDYF (254 aa)). ATP is bound by residues 284-292 (LGQGCFGEV) and Lys306. Residue Asp397 is the Proton acceptor of the active site. At Tyr427 the chain carries Phosphotyrosine; by autocatalysis.

The protein belongs to the protein kinase superfamily. Tyr protein kinase family. SRC subfamily.

It catalyses the reaction L-tyrosyl-[protein] + ATP = O-phospho-L-tyrosyl-[protein] + ADP + H(+). This Xiphophorus hellerii (Green swordtail) protein is Tyrosine-protein kinase Yes (yes).